A 226-amino-acid chain; its full sequence is MNKLETNNNQYWLDRWQNDDVGFCQESPNEFLVKHFSKLNINDSSVCLIPMCGCSIDMLFFLSKGVKVIGIELSEKAVLSFFSQNTINYEVIHGNDYKLYKGDDIEIYVADIFNLPKIANNLPVFDIWYDRGAYIALPNDLRTNYAKMMLEVCSNNTQILLLVMEHDKKSQTPPYSVTQAELIKNFSAKIKFELIDSKQRDNIPDYRKAEGMTEQYYTTYLRKKQY.

Positions 16, 51, 72, and 131 each coordinate S-adenosyl-L-methionine.

This sequence belongs to the class I-like SAM-binding methyltransferase superfamily. TPMT family.

The protein localises to the cytoplasm. It carries out the reaction S-adenosyl-L-methionine + a thiopurine = S-adenosyl-L-homocysteine + a thiopurine S-methylether.. The chain is Thiopurine S-methyltransferase from Francisella tularensis subsp. tularensis (strain SCHU S4 / Schu 4).